A 303-amino-acid chain; its full sequence is HTH-type transcriptional regulator LysG (303 aa).

An HTH lysR-type domain is found at 6–62 (LDGPQLAALAAVVELGSFDAAAERLHVTPSAVSQRIKSLEQQVGQVLVVREKPCRAT). The H-T-H motif DNA-binding region spans 23–42 (FDAAAERLHVTPSAVSQRIK).

This sequence belongs to the LysR transcriptional regulatory family. As to quaternary structure, homodimer.

In terms of biological role, positively regulates the expression of the exporter LysE and represses its own expression. This chain is HTH-type transcriptional regulator LysG, found in Mycobacterium bovis (strain ATCC BAA-935 / AF2122/97).